Here is a 520-residue protein sequence, read N- to C-terminus: Interferon lambda receptor 1 (520 aa).

Positions 1–20 (MAGPERWGPLLLCLLQAAPG) are cleaved as a signal peptide. Topologically, residues 21-228 (RPRLAPPQNV…LLEVPEANWA (208 aa)) are extracellular. In terms of domain architecture, Fibronectin type-III spans 26-126 (PPQNVTLLSQ…LDYLFEVEPA (101 aa)). N29 and N36 each carry an N-linked (GlcNAc...) asparagine glycan. Intrachain disulfides connect C74–C82 and C86–C150. Residues N142 and N169 are each glycosylated (N-linked (GlcNAc...) asparagine). An intrachain disulfide couples C195 to C217. A helical membrane pass occupies residues 229–249 (FLVLPSLLILLLVIAAGGVIW). The Cytoplasmic portion of the chain corresponds to 250–520 (KTLMGNPWFQ…GRTLGHYMAR (271 aa)). Disordered regions lie at residues 302–439 (VRPT…FLEE) and 477–520 (ESSP…YMAR). Positions 323–336 (AEDEEEEDEEDTED) are enriched in acidic residues. Residues 380 to 392 (SSAWDSSDRSWAS) are compositionally biased toward low complexity. The span at 479–495 (SPEEEEEARESEIEDSD) shows a compositional bias: acidic residues.

Belongs to the type II cytokine receptor family. In terms of assembly, heterodimer with IL10RB. Ubiquitinated by FBXO45-containing E3 ligase leading to proteasomal degradation. Widely expressed.

The protein localises to the membrane. The IFNLR1/IL10RB dimer is a receptor for the cytokine ligands IFNL2 and IFNL3 and mediates their antiviral activity. The ligand/receptor complex stimulate the activation of the JAK/STAT signaling pathway leading to the expression of IFN-stimulated genes (ISG), which contribute to the antiviral state. Determines the cell type specificity of the lambda interferon action. Shows a more restricted pattern of expression in the epithelial tissues thereby limiting responses to lambda interferons primarily to epithelial cells of the respiratory, gastrointestinal, and reproductive tracts. Seems not to be essential for early virus-activated host defense in vaginal infection, but plays an important role in Toll-like receptor (TLR)-induced antiviral defense. Plays a significant role in the antiviral immune defense in the intestinal epithelium. The chain is Interferon lambda receptor 1 (IFNLR1) from Homo sapiens (Human).